Reading from the N-terminus, the 1940-residue chain is MALTAEEAYLEELWREEDEQSEEATAMQQMLAHQHEQQHDALPSYQELMGQGSPAVTLRRAKAAAAANGTSSPGIRGSPSPARGPGGRLPSLAMGPTVGANVEQLKRRLQTVVAEVEGHQQRYDKVLLEANKATDLVHSMEAEIESLYVEAEELARRVPPAAERQRQVATWLAQRSAALEAQRQVLGGKQLELIEAEAALRAAETELDFMAEARNEIAAAQAAETAALSAAAATLRGKEDKAVAGYRRKQAAEAARLADVAAAAEDLAQRRIQAAEEAQAQAMERLKANTERIREGIASGRDLLAAEQSRRREAVLGLKESLAAVQADVAQQAELARVLQRQRRDLQEKEFGALVEAGMNPYEVFRRRDQEAAAARQHEAITSNIATRQLEVAAQLAREQEAYAQKLAARKREKKTREIFDREMGPAAQQARTEAYMQAHTVGGVSMLDPTGRVQPFPSEAVVVKTRRFGRGGAPEEVLQQQLQRLGDDTQPKQLLLPAKYRNTADTDAAAVAGLGRGGGSDDEDGMGSPPRSPSLTQQLAATQQSLTATASLAQQQQQAAGDRYKQLATRALTKHEQGLMEAAKTRHKGGIGAPQTQMGRTFGGDAFLPSPAVVEFKDFDVGRTVSASVQIINRSYKKNTFRVTGIPVEYCDVLDFAYKLPGYLAPGVSGEVVISFTPKAPVDIDTSLQLLADTGPFEVPIRCRTKRAALSVSPSAVDFGAGVTLGECATRTFTIANDGALEVEFRLDSPQLSEDERALLKSTANMAHLMTSATVAAAAAAAAATASGQGPRSARSFANMGVADGAAPETDTGPLVAPREERRLAHGGFTVFPCVGHLKGYSKVTFTVTFAPVVAAPAKLLLHASYKAPAMKRLALPHHEVTLTGTGRDVPVYVERPLIDFQCCMLGHLYRDVLVVRNGGKSAMKVMVVPRPELEGFFEFSPDFGFVQAGDSFPITIRFKPTPALLHACRKHVVEPEEEQILEIGMRLSVPDQSLPVPFTLRAQITNTDLLFQPPALDFGDCVMGERTAVKLLVRNPGRLPQTFGFVGLPSGLHFTPNDGFGYVLPGEALERLVSFQPPIAGPQTFSITAKTLAGRSFTLPCRANGVAPPVVLSSNRVRMPATPIGDTRTVSVVLINKTDQPQSYEFAVPADSDLTLSPHVGRVPPQSRLRVQIDYSPRPPVDGEQQGALPPPSAPNTARGPRDGGGGGAMANGNGSGGYEHYNDDGEPEDGEGDADGHTDTDSFQSPSARASPVQPLGRGGRGGRGGAAGEDEDEDEDAGELPVRGKSSSSSKASSGRRSSSPQLGGRQGLAMGRINEVPDDDDADAEAEAAAEAEQRTALAALKRIQSMGGGDPGWYRWREHAITCYIKPQSQNPTPSQSQSGQAPAASAPSDGASGAAAAAETAASSGPAAAPPPQEIHLQVATCAVLPDLVLLAPPDLPYVPLHQCHCLDFGPVPVGQRVVRRLELANEGEEPLVLGAESMDSREVFGLVNALRPVRPGASFRVMVSFTPQARTEYLEVLVLKSARTRLRLALKGAGIAPELQLGPEGVTATGLDMGDVLVGEAAARTLTVTNVCPFPLSFTMRLAGKASAADPNPTMRQAFSCHPAEGTLAQGESCEVAVSFTPFSQRPYFEDVLQVVVPNQQDQLLVPLRGRGWREAVFVAGPDYPEPQPDPFLLHHLAKQAGVALPPSVSGGGAAAGGAAVAAAAAGDKPSTPAPGIKPPATPPGGASKGKAAAAAAAAAAAAAAGASEPRELTLNFPHAIYPGEVATASFDVGSLKSTASGSAPGEVGVAELPAEAREAGWAVTDPPTAGAGGGGKVPLAAGERKPITLSYSAPAAPHPGMVAAYGHAEYRVLKLQLTLKGGLAALSGGPEGRKVVVAARCRLLPGSRPPGEPVPPGVTPAPEPVAASGPGAGAAGVKKLVPPPSPPKKAV.

Residues 52 to 90 (GSPAVTLRRAKAAAAANGTSSPGIRGSPSPARGPGGRLP) form a disordered region. Low complexity predominate over residues 63–90 (AAAAANGTSSPGIRGSPSPARGPGGRLP). Residues 100–159 (ANVEQLKRRLQTVVAEVEGHQQRYDKVLLEANKATDLVHSMEAEIESLYVEAEELARRVP) are a coiled coil. 5 disordered regions span residues 512–548 (VAGL…QSLT), 1159–1336 (SPHV…AAAE), 1373–1418 (PQSQ…AAPP), 1714–1737 (AGDK…GASK), and 1894–1940 (PGSR…KKAV). The span at 535 to 548 (SLTQQLAATQQSLT) shows a compositional bias: low complexity. A compositionally biased stretch (gly residues) spans 1205–1220 (DGGGGGAMANGNGSGG). Acidic residues predominate over residues 1227 to 1236 (DGEPEDGEGD). A compositionally biased stretch (gly residues) spans 1260 to 1271 (GRGGRGGRGGAA). Residues 1272-1282 (GEDEDEDEDAG) show a composition bias toward acidic residues. Positions 1287 to 1304 (RGKSSSSSKASSGRRSSS) are enriched in low complexity. Positions 1321–1335 (VPDDDDADAEAEAAA) are enriched in acidic residues. Residues 1373–1414 (PQSQNPTPSQSQSGQAPAASAPSDGASGAAAAAETAASSGPA) show a composition bias toward low complexity. Pro residues-rich tracts occupy residues 1720–1731 (TPAPGIKPPATP) and 1896–1912 (SRPP…PAPE). Residues 1913–1929 (PVAASGPGAGAAGVKKL) are compositionally biased toward low complexity. Over residues 1930–1940 (VPPPSPPKKAV) the composition is skewed to pro residues.

This sequence belongs to the CFAP74 family. As to quaternary structure, part of the PDCP1 complex composed of CFAP46, CFAP54, CFAP74 and CFAP221; the PDCP1 complex binds calmodulin.

The protein resides in the cytoplasm. It is found in the cytoskeleton. It localises to the cilium axoneme. Its function is as follows. As part of the central apparatus of the cilium axoneme may play a role in cilium movement and thereby cell motility. The protein is Cilia- and flagella-associated protein 74 of Chlamydomonas reinhardtii (Chlamydomonas smithii).